A 209-amino-acid chain; its full sequence is Tektin bundle-interacting protein 1 (209 aa).

In terms of assembly, microtubule inner protein component of sperm flagellar doublet microtubules.

It localises to the cytoplasm. It is found in the cytoskeleton. The protein localises to the cilium axoneme. Its subcellular location is the flagellum axoneme. Functionally, microtubule inner protein (MIP) part of the dynein-decorated doublet microtubules (DMTs) in cilia axoneme, which is required for motile cilia beating. Located at the center of the tektin bundle where may function to recruit tektins or stabilize the bundle. The polypeptide is Tektin bundle-interacting protein 1 (TEKTIP1) (Macaca fascicularis (Crab-eating macaque)).